Reading from the N-terminus, the 199-residue chain is DnaJ homolog subfamily C member 5B (199 aa).

Residues Ser-14 and Ser-16 each carry the phosphoserine modification. The J domain occupies 19–84 (ALYEILGLQK…SKRNIYDKYG (66 aa)).

In terms of assembly, interacts with the chaperone complex consisting of HSC70 and SGTA. In terms of processing, palmitoylated.

It is found in the membrane. This chain is DnaJ homolog subfamily C member 5B (DNAJC5B), found in Ailuropoda melanoleuca (Giant panda).